A 97-amino-acid polypeptide reads, in one-letter code: uncharacterized protein (97 aa).

A disordered region spans residues 38–97 (TSPPDWNKFSGKVSINEPTTSKSKSKSTSTSTSTSTSTSTSTSTSSSTSSTSSTTSSINK). Over residues 56 to 97 (TTSKSKSKSTSTSTSTSTSTSTSTSTSSSTSSTSSTTSSINK) the composition is skewed to low complexity.

This is an uncharacterized protein from Dictyostelium discoideum (Social amoeba).